The following is a 644-amino-acid chain: Neurofilament medium polypeptide (644 aa).

Positions 1–33 (VKVELDKKVQSLQDEVAFLRTNHEEEVADLLAQ) are coil 1B. Residues 1–197 (VKVELDKKVQ…KLLEGEETRF (197 aa)) form the IF rod domain. Serine 11 carries the phosphoserine modification. Residues 34–50 (IQASHITVERKDYLKTD) are linker 12. Positions 51-72 (ISSALKEIRSQLECHSDQNMHQ) are coil 2A. The segment at 73 to 76 (AEEW) is linker 2. The tract at residues 77–197 (FKCRYAKLTE…KLLEGEETRF (121 aa)) is coil 2B. Tyrosine 105 carries the post-translational modification Phosphotyrosine. A phosphoserine mark is found at serine 131, serine 203, and serine 215. A tail region spans residues 198 to 643 (STFSGSITGP…HAIVKEVTQS (446 aa)). Residue threonine 217 is glycosylated (O-linked (GlcNAc) threonine). Phosphoserine occurs at positions 253 and 269. The interval 270-582 (VKEEEKEEEA…GGDRSEEKVV (313 aa)) is disordered. Positions 274 to 292 (EKEEEAEGKEEEQEAEEEV) are enriched in acidic residues. Serine 298 carries the phosphoserine modification. Acidic residues predominate over residues 308–328 (KEEEGEKEEEGQEEEEEEEDE). The segment covering 329–350 (GVKSDQAEEGGSEKEGSSKNEG) has biased composition (basic and acidic residues). 4 positions are modified to phosphoserine: serine 332, serine 340, serine 345, and serine 346. Positions 351-368 (EQEEGETEAEGEVEEAEA) are enriched in acidic residues. Phosphothreonine is present on threonine 357. Residues 369 to 400 (KEEKKTEEKSEEVAAKEEPVTEAKVGKPEKAK) show a composition bias toward basic and acidic residues. Residues serine 401, serine 406, serine 442, and serine 465 each carry the phosphoserine modification. The segment covering 422–470 (GEQKEEEEKVEEEKKKAAKESPKEEKVEKKEEKPKDVPKKKAESPVKEE) has biased composition (basic and acidic residues). Over residues 474–483 (EAATITKPTK) the composition is skewed to low complexity. Positions 485–508 (GLEKETKEGEKPLQQEKEKEKAGE) are enriched in basic and acidic residues. Phosphoserine is present on residues serine 512, serine 550, and serine 566. Residues 545 to 557 (TKEKGSGREEEKG) show a composition bias toward basic and acidic residues. Basic and acidic residues predominate over residues 568–582 (ADEKKGGDRSEEKVV).

The protein belongs to the intermediate filament family. As to quaternary structure, forms heterodimers with NEFL; which can further hetero-oligomerize (in vitro). Forms heterodimers with INA (in vitro). In terms of processing, there are a number of repeats of the tripeptide K-S-P, NFM is phosphorylated on a number of the serines in this motif. It is thought that phosphorylation of NFM results in the formation of interfilament cross bridges that are important in the maintenance of axonal caliber. Phosphorylation seems to play a major role in the functioning of the larger neurofilament polypeptides (NF-M and NF-H), the levels of phosphorylation being altered developmentally and coincidentally with a change in the neurofilament function. Post-translationally, phosphorylated in the head and rod regions by the PKC kinase PKN1, leading to the inhibition of polymerization.

The protein resides in the cytoplasm. The protein localises to the cytoskeleton. It is found in the cell projection. Its subcellular location is the axon. Functionally, neurofilaments usually contain three intermediate filament proteins: NEFL, NEFM, and NEFH which are involved in the maintenance of neuronal caliber. May additionally cooperate with the neuronal intermediate filament proteins PRPH and INA to form neuronal filamentous networks. In Oryctolagus cuniculus (Rabbit), this protein is Neurofilament medium polypeptide (NEFM).